The primary structure comprises 415 residues: Squalene synthase 3 (415 aa).

Helical transmembrane passes span 281–301 and 392–412; these read AIFR…ALCY and LIII…SNLP.

The protein belongs to the phytoene/squalene synthase family. Requires Mg(2+) as cofactor. Mn(2+) serves as cofactor.

The protein resides in the endoplasmic reticulum membrane. It catalyses the reaction 2 (2E,6E)-farnesyl diphosphate + NADH + H(+) = squalene + 2 diphosphate + NAD(+). It carries out the reaction 2 (2E,6E)-farnesyl diphosphate + NADPH + H(+) = squalene + 2 diphosphate + NADP(+). It functions in the pathway terpene metabolism; lanosterol biosynthesis; lanosterol from farnesyl diphosphate: step 1/3. In terms of biological role, component of the triterpene saponins (e.g. ginsenosides or panaxosides) and phytosterols biosynthetic pathways. Catalyzes the biosynthesis of squalene. The chain is Squalene synthase 3 from Panax ginseng (Korean ginseng).